Here is a 404-residue protein sequence, read N- to C-terminus: Cysteine desulfurase IscS (404 aa).

Residues Ala-75–Thr-76, Asn-155, Gln-183, and Ser-203–His-205 each bind pyridoxal 5'-phosphate. Lys-206 is modified (N6-(pyridoxal phosphate)lysine). Thr-243 contacts pyridoxal 5'-phosphate. The active-site Cysteine persulfide intermediate is Cys-328. Cys-328 contributes to the [2Fe-2S] cluster binding site.

Belongs to the class-V pyridoxal-phosphate-dependent aminotransferase family. NifS/IscS subfamily. In terms of assembly, homodimer. Forms a heterotetramer with IscU, interacts with other sulfur acceptors. It depends on pyridoxal 5'-phosphate as a cofactor.

The protein localises to the cytoplasm. It catalyses the reaction (sulfur carrier)-H + L-cysteine = (sulfur carrier)-SH + L-alanine. It functions in the pathway cofactor biosynthesis; iron-sulfur cluster biosynthesis. In terms of biological role, master enzyme that delivers sulfur to a number of partners involved in Fe-S cluster assembly, tRNA modification or cofactor biosynthesis. Catalyzes the removal of elemental sulfur atoms from cysteine to produce alanine. Functions as a sulfur delivery protein for Fe-S cluster synthesis onto IscU, an Fe-S scaffold assembly protein, as well as other S acceptor proteins. This is Cysteine desulfurase IscS from Aeromonas hydrophila subsp. hydrophila (strain ATCC 7966 / DSM 30187 / BCRC 13018 / CCUG 14551 / JCM 1027 / KCTC 2358 / NCIMB 9240 / NCTC 8049).